The following is a 475-amino-acid chain: Aspartyl/glutamyl-tRNA(Asn/Gln) amidotransferase subunit B (475 aa).

This sequence belongs to the GatB/GatE family. GatB subfamily. Heterotrimer of A, B and C subunits.

The enzyme catalyses L-glutamyl-tRNA(Gln) + L-glutamine + ATP + H2O = L-glutaminyl-tRNA(Gln) + L-glutamate + ADP + phosphate + H(+). The catalysed reaction is L-aspartyl-tRNA(Asn) + L-glutamine + ATP + H2O = L-asparaginyl-tRNA(Asn) + L-glutamate + ADP + phosphate + 2 H(+). In terms of biological role, allows the formation of correctly charged Asn-tRNA(Asn) or Gln-tRNA(Gln) through the transamidation of misacylated Asp-tRNA(Asn) or Glu-tRNA(Gln) in organisms which lack either or both of asparaginyl-tRNA or glutaminyl-tRNA synthetases. The reaction takes place in the presence of glutamine and ATP through an activated phospho-Asp-tRNA(Asn) or phospho-Glu-tRNA(Gln). The polypeptide is Aspartyl/glutamyl-tRNA(Asn/Gln) amidotransferase subunit B (Chlorobium phaeobacteroides (strain DSM 266 / SMG 266 / 2430)).